We begin with the raw amino-acid sequence, 75 residues long: Translational regulator CsrA (75 aa).

Belongs to the CsrA/RsmA family. As to quaternary structure, homodimer; the beta-strands of each monomer intercalate to form a hydrophobic core, while the alpha-helices form wings that extend away from the core.

It is found in the cytoplasm. Its function is as follows. A translational regulator that binds mRNA to regulate translation initiation and/or mRNA stability. Usually binds in the 5'-UTR at or near the Shine-Dalgarno sequence preventing ribosome-binding, thus repressing translation. Its main target seems to be the major flagellin gene, while its function is anatagonized by FliW. This chain is Translational regulator CsrA, found in Acetivibrio thermocellus (strain ATCC 27405 / DSM 1237 / JCM 9322 / NBRC 103400 / NCIMB 10682 / NRRL B-4536 / VPI 7372) (Clostridium thermocellum).